A 708-amino-acid chain; its full sequence is Ion-translocating oxidoreductase complex subunit C (708 aa).

4Fe-4S ferredoxin-type domains lie at 369–397 (GEPQ…QQLY) and 407–436 (KATT…VQYF). [4Fe-4S] cluster is bound by residues cysteine 377, cysteine 380, cysteine 383, cysteine 387, cysteine 416, cysteine 419, cysteine 422, and cysteine 426. The disordered stretch occupies residues 599 to 686 (KARKLEQQQS…EEQVDPRKAA (88 aa)).

This sequence belongs to the 4Fe4S bacterial-type ferredoxin family. RnfC subfamily. In terms of assembly, the complex is composed of six subunits: RsxA, RsxB, RsxC, RsxD, RsxE and RsxG. The cofactor is [4Fe-4S] cluster.

The protein resides in the cell inner membrane. Functionally, part of a membrane-bound complex that couples electron transfer with translocation of ions across the membrane. Required to maintain the reduced state of SoxR. In Escherichia coli (strain 55989 / EAEC), this protein is Ion-translocating oxidoreductase complex subunit C.